The primary structure comprises 186 residues: Peptidyl-tRNA hydrolase (186 aa).

Tyr-14 is a tRNA binding site. The active-site Proton acceptor is the His-19. TRNA is bound by residues Phe-64, Asn-66, and Asn-112.

Belongs to the PTH family. As to quaternary structure, monomer.

It is found in the cytoplasm. The catalysed reaction is an N-acyl-L-alpha-aminoacyl-tRNA + H2O = an N-acyl-L-amino acid + a tRNA + H(+). Hydrolyzes ribosome-free peptidyl-tRNAs (with 1 or more amino acids incorporated), which drop off the ribosome during protein synthesis, or as a result of ribosome stalling. Its function is as follows. Catalyzes the release of premature peptidyl moieties from peptidyl-tRNA molecules trapped in stalled 50S ribosomal subunits, and thus maintains levels of free tRNAs and 50S ribosomes. The protein is Peptidyl-tRNA hydrolase of Listeria monocytogenes serovar 1/2a (strain ATCC BAA-679 / EGD-e).